Reading from the N-terminus, the 457-residue chain is Siroheme synthase (457 aa).

The tract at residues 1 to 204 (MDHLPIFCQL…QDQQAVEETT (204 aa)) is precorrin-2 dehydrogenase /sirohydrochlorin ferrochelatase. NAD(+) contacts are provided by residues 22-23 (DV) and 43-44 (LA). Ser128 bears the Phosphoserine mark. The tract at residues 216–457 (GEVVLVGAGP…REKLNWFSNH (242 aa)) is uroporphyrinogen-III C-methyltransferase. Pro225 provides a ligand contact to S-adenosyl-L-methionine. Asp248 functions as the Proton acceptor in the catalytic mechanism. Lys270 (proton donor) is an active-site residue. S-adenosyl-L-methionine contacts are provided by residues 301-303 (GGD), Ile306, 331-332 (TA), Met382, and Gly411.

In the N-terminal section; belongs to the precorrin-2 dehydrogenase / sirohydrochlorin ferrochelatase family. The protein in the C-terminal section; belongs to the precorrin methyltransferase family.

The enzyme catalyses uroporphyrinogen III + 2 S-adenosyl-L-methionine = precorrin-2 + 2 S-adenosyl-L-homocysteine + H(+). It carries out the reaction precorrin-2 + NAD(+) = sirohydrochlorin + NADH + 2 H(+). It catalyses the reaction siroheme + 2 H(+) = sirohydrochlorin + Fe(2+). It participates in cofactor biosynthesis; adenosylcobalamin biosynthesis; precorrin-2 from uroporphyrinogen III: step 1/1. Its pathway is cofactor biosynthesis; adenosylcobalamin biosynthesis; sirohydrochlorin from precorrin-2: step 1/1. The protein operates within porphyrin-containing compound metabolism; siroheme biosynthesis; precorrin-2 from uroporphyrinogen III: step 1/1. It functions in the pathway porphyrin-containing compound metabolism; siroheme biosynthesis; siroheme from sirohydrochlorin: step 1/1. It participates in porphyrin-containing compound metabolism; siroheme biosynthesis; sirohydrochlorin from precorrin-2: step 1/1. Functionally, multifunctional enzyme that catalyzes the SAM-dependent methylations of uroporphyrinogen III at position C-2 and C-7 to form precorrin-2 via precorrin-1. Then it catalyzes the NAD-dependent ring dehydrogenation of precorrin-2 to yield sirohydrochlorin. Finally, it catalyzes the ferrochelation of sirohydrochlorin to yield siroheme. The sequence is that of Siroheme synthase from Enterobacter sp. (strain 638).